The primary structure comprises 920 residues: Isoleucine--tRNA ligase (920 aa).

The short motif at 58–68 (PYANGHLHLGH) is the 'HIGH' region element. E569 is an L-isoleucyl-5'-AMP binding site. Positions 610–614 (KMSKS) match the 'KMSKS' region motif. Residue K613 coordinates ATP. Zn(2+) is bound by residues C895, C898, C910, and C913.

Belongs to the class-I aminoacyl-tRNA synthetase family. IleS type 1 subfamily. As to quaternary structure, monomer. Requires Zn(2+) as cofactor.

It is found in the cytoplasm. The enzyme catalyses tRNA(Ile) + L-isoleucine + ATP = L-isoleucyl-tRNA(Ile) + AMP + diphosphate. Catalyzes the attachment of isoleucine to tRNA(Ile). As IleRS can inadvertently accommodate and process structurally similar amino acids such as valine, to avoid such errors it has two additional distinct tRNA(Ile)-dependent editing activities. One activity is designated as 'pretransfer' editing and involves the hydrolysis of activated Val-AMP. The other activity is designated 'posttransfer' editing and involves deacylation of mischarged Val-tRNA(Ile). The sequence is that of Isoleucine--tRNA ligase from Helicobacter pylori (strain ATCC 700392 / 26695) (Campylobacter pylori).